A 62-amino-acid polypeptide reads, in one-letter code: Photosystem II reaction center protein Z (62 aa).

The next 2 helical transmembrane spans lie at 8–28 and 41–61; these read LIAAFVALSFAMIIGVPVVFS and WGGAAAWVVLLFVAALASIVV.

Belongs to the PsbZ family. In terms of assembly, PSII is composed of 1 copy each of membrane proteins PsbA, PsbB, PsbC, PsbD, PsbE, PsbF, PsbH, PsbI, PsbJ, PsbK, PsbL, PsbM, PsbT, PsbX, PsbY, PsbZ, Psb30/Ycf12, peripheral proteins PsbO, CyanoQ (PsbQ), PsbU, PsbV and a large number of cofactors. It forms dimeric complexes.

It is found in the cellular thylakoid membrane. Its function is as follows. May control the interaction of photosystem II (PSII) cores with the light-harvesting antenna, regulates electron flow through the 2 photosystem reaction centers. PSII is a light-driven water plastoquinone oxidoreductase, using light energy to abstract electrons from H(2)O, generating a proton gradient subsequently used for ATP formation. In Acaryochloris marina (strain MBIC 11017), this protein is Photosystem II reaction center protein Z.